The chain runs to 770 residues: Pheromone-regulated membrane protein 10 (770 aa).

2 disordered regions span residues 1–125 (MDGR…DGDD) and 139–169 (NQGGLVPGLAPIPSENENGKDDIEKNNRNEE). Composition is skewed to polar residues over residues 49-63 (SGKSISDLGISNNDN) and 78-93 (DLSSRSTETSDNSKGT). The span at 155 to 169 (ENGKDDIEKNNRNEE) shows a compositional bias: basic and acidic residues. Transmembrane regions (helical) follow at residues 453–473 (WMCVLLYAFCSAMVTPYAFGG), 475–495 (WVNLAISFFMGLCVGSLQFIL), 505–525 (VFEISASIVVSFCGRAFGSIP), 529–549 (ICFGAVTQGSLALILPGYIIL), 568–588 (FYAIIYSLFLGFGITLGSALF), 604–624 (LISPWFRFLFVPAFTISISLL), 629–649 (ISQLPVMVFISCTGYVVTYWA), 659–679 (FTAALAAFVIGVLGNLYSRIW), 681–701 (GLAVSAMLPAIFVQVPSGIAS), and 740–760 (IQVCVGISVGLFASSLFVYPF).

This sequence belongs to the ThrE exporter (TC 2.A.79) family.

The protein resides in the membrane. The sequence is that of Pheromone-regulated membrane protein 10 (PRM10) from Saccharomyces cerevisiae (strain YJM789) (Baker's yeast).